Here is a 179-residue protein sequence, read N- to C-terminus: Zinc finger HIT domain-containing protein 3 (179 aa).

Zn(2+) is bound by residues C11, C14, C22, C25, C30, C34, H38, and C49. The HIT-type zinc finger occupies 11–49 (CVVCLEKPKYRCPACRVPYCSLPCFRKHKAPPLQQLPVC). At S104 the chain carries Phosphoserine.

As to quaternary structure, thyroid receptor interacting proteins (TRIPs) specifically interact with the ligand binding domain of the thyroid receptor (TR). Requires the presence of thyroid hormone for its interaction. Interacts with NUFIP1. Interacts (via HIT-type zinc finger) with the RUVBL1/RUVBL2 complex in the presence of ADP.

Its subcellular location is the cytoplasm. It localises to the nucleus. This is Zinc finger HIT domain-containing protein 3 (ZNHIT3) from Bos taurus (Bovine).